The chain runs to 101 residues: NAD(P)H-quinone oxidoreductase subunit 4L, chloroplastic (101 aa).

Helical transmembrane passes span 2-22, 32-52, and 61-81; these read MFEH…YGLI, MCLE…SDLF, and IFSI…LAIV.

Belongs to the complex I subunit 4L family. As to quaternary structure, NDH is composed of at least 16 different subunits, 5 of which are encoded in the nucleus.

It localises to the plastid. The protein localises to the chloroplast thylakoid membrane. It catalyses the reaction a plastoquinone + NADH + (n+1) H(+)(in) = a plastoquinol + NAD(+) + n H(+)(out). It carries out the reaction a plastoquinone + NADPH + (n+1) H(+)(in) = a plastoquinol + NADP(+) + n H(+)(out). NDH shuttles electrons from NAD(P)H:plastoquinone, via FMN and iron-sulfur (Fe-S) centers, to quinones in the photosynthetic chain and possibly in a chloroplast respiratory chain. The immediate electron acceptor for the enzyme in this species is believed to be plastoquinone. Couples the redox reaction to proton translocation, and thus conserves the redox energy in a proton gradient. In Lemna minor (Common duckweed), this protein is NAD(P)H-quinone oxidoreductase subunit 4L, chloroplastic.